We begin with the raw amino-acid sequence, 431 residues long: tRNA-specific 2-thiouridylase MnmA (431 aa).

ATP is bound by residues 35–42 (AMSGGVDS) and L61. The active-site Nucleophile is the C129. The cysteines at positions 129 and 226 are disulfide-linked. G153 contacts ATP. The interaction with tRNA stretch occupies residues 176-178 (RDQ). Residue C226 is the Cysteine persulfide intermediate of the active site. The interval 407 to 431 (PKPPNEDLLDTNESSDLVSPKRSAC) is disordered.

The protein belongs to the MnmA/TRMU family.

It is found in the cytoplasm. The enzyme catalyses S-sulfanyl-L-cysteinyl-[protein] + uridine(34) in tRNA + AH2 + ATP = 2-thiouridine(34) in tRNA + L-cysteinyl-[protein] + A + AMP + diphosphate + H(+). Its function is as follows. Catalyzes the 2-thiolation of uridine at the wobble position (U34) of tRNA, leading to the formation of s(2)U34. This is tRNA-specific 2-thiouridylase MnmA from Beijerinckia indica subsp. indica (strain ATCC 9039 / DSM 1715 / NCIMB 8712).